A 372-amino-acid chain; its full sequence is Cytochrome b (372 aa).

The next 4 helical transmembrane spans lie at 25 to 45 (FGSM…FLAL), 69 to 90 (WIMQ…YIHI), 105 to 125 (WLSG…GYVL), and 170 to 190 (FFAL…IHII). The heme b site is built by histidine 75 and histidine 89. Heme b-binding residues include histidine 174 and histidine 188. A ubiquinone is bound at residue histidine 193. Transmembrane regions (helical) follow at residues 218-238 (YKDM…LSFA), 280-300 (LGGT…PFTH), 312-332 (LSQI…WTAS), and 339-358 (FITI…ITTP).

Belongs to the cytochrome b family. The cytochrome bc1 complex contains 3 respiratory subunits (MT-CYB, CYC1 and UQCRFS1), 2 core proteins (UQCRC1 and UQCRC2) and probably 6 low-molecular weight proteins. Heme b is required as a cofactor.

It is found in the mitochondrion inner membrane. Component of the ubiquinol-cytochrome c reductase complex (complex III or cytochrome b-c1 complex) that is part of the mitochondrial respiratory chain. The b-c1 complex mediates electron transfer from ubiquinol to cytochrome c. Contributes to the generation of a proton gradient across the mitochondrial membrane that is then used for ATP synthesis. The polypeptide is Cytochrome b (MT-CYB) (Naja nivea (Cape cobra)).